An 817-amino-acid chain; its full sequence is Alpha-bisabolene synthase (817 aa).

5 residues coordinate Mg(2+): Asp-566, Asp-570, Asp-713, Thr-717, and Glu-721. The short motif at 566 to 570 (DDMYD) is the DDXXD motif element.

Belongs to the terpene synthase family. Tpsd subfamily. Mg(2+) is required as a cofactor. Mn(2+) serves as cofactor. The cofactor is K(+).

Its subcellular location is the cytoplasm. The enzyme catalyses (2E,6E)-farnesyl diphosphate = (E,R)-alpha-bisabolene + diphosphate. Its pathway is terpene metabolism; oleoresin biosynthesis. Functionally, converts farnesyl diphosphate to alpha-bisabolene. Involved in defensive oleoresin formation in conifers in response to insect attack or other injury. Involved in sesquiterpene (C15) olefins biosynthesis. The polypeptide is Alpha-bisabolene synthase (ag1) (Abies grandis (Grand fir)).